Consider the following 292-residue polypeptide: Phosphatidylserine decarboxylase proenzyme (292 aa).

Residues Asp89, His146, and Ser252 each act as charge relay system; for autoendoproteolytic cleavage activity in the active site. Catalysis depends on Ser252, which acts as the Schiff-base intermediate with substrate; via pyruvic acid; for decarboxylase activity. Residue Ser252 is modified to Pyruvic acid (Ser); by autocatalysis.

Belongs to the phosphatidylserine decarboxylase family. PSD-B subfamily. Prokaryotic type I sub-subfamily. Heterodimer of a large membrane-associated beta subunit and a small pyruvoyl-containing alpha subunit. It depends on pyruvate as a cofactor. Post-translationally, is synthesized initially as an inactive proenzyme. Formation of the active enzyme involves a self-maturation process in which the active site pyruvoyl group is generated from an internal serine residue via an autocatalytic post-translational modification. Two non-identical subunits are generated from the proenzyme in this reaction, and the pyruvate is formed at the N-terminus of the alpha chain, which is derived from the carboxyl end of the proenzyme. The autoendoproteolytic cleavage occurs by a canonical serine protease mechanism, in which the side chain hydroxyl group of the serine supplies its oxygen atom to form the C-terminus of the beta chain, while the remainder of the serine residue undergoes an oxidative deamination to produce ammonia and the pyruvoyl prosthetic group on the alpha chain. During this reaction, the Ser that is part of the protease active site of the proenzyme becomes the pyruvoyl prosthetic group, which constitutes an essential element of the active site of the mature decarboxylase.

The protein resides in the cell membrane. The enzyme catalyses a 1,2-diacyl-sn-glycero-3-phospho-L-serine + H(+) = a 1,2-diacyl-sn-glycero-3-phosphoethanolamine + CO2. The protein operates within phospholipid metabolism; phosphatidylethanolamine biosynthesis; phosphatidylethanolamine from CDP-diacylglycerol: step 2/2. Catalyzes the formation of phosphatidylethanolamine (PtdEtn) from phosphatidylserine (PtdSer). This Shewanella sp. (strain MR-7) protein is Phosphatidylserine decarboxylase proenzyme.